The chain runs to 289 residues: MAISQAVLATVFGILGNIISFFVCLAPIPTFVRIYKRKSSEGYQSIPYVISLFSAMLWMYYAMIKKDAMMLITINSFAFVVQIVYISLFFFYAPKKEKTLTVKFVLFVDVLGFGAIFVLTYFIIHANKRVQVLGYICMVFALSVFVAPLGIIRKVIKTKSAEFMPFGLSFFLTLSAVMWFFYGLLLKDMNIALPNVLGFIFGVLQMILFLIYKKPGTKVLEPPGIKLQDISEHVVDVVRLSTMVCNSQMRTLVPQDSADMEATIDIDEKIKGDIEKNKDEKEVFLISKN.

Topologically, residues 1–5 (MAISQ) are extracellular. The chain crosses the membrane as a helical span at residues 6-26 (AVLATVFGILGNIISFFVCLA). The MtN3/slv 1 domain maps to 11–96 (VFGILGNIIS…SLFFFYAPKK (86 aa)). Residues 27–43 (PIPTFVRIYKRKSSEGY) lie on the Cytoplasmic side of the membrane. The chain crosses the membrane as a helical span at residues 44-64 (QSIPYVISLFSAMLWMYYAMI). Over 65 to 70 (KKDAMM) the chain is Extracellular. Residues 71–91 (LITINSFAFVVQIVYISLFFF) form a helical membrane-spanning segment. The Cytoplasmic portion of the chain corresponds to 92-103 (YAPKKEKTLTVK). A helical membrane pass occupies residues 104–124 (FVLFVDVLGFGAIFVLTYFII). Residues 125 to 131 (HANKRVQ) are Extracellular-facing. The 84-residue stretch at 131-214 (QVLGYICMVF…QMILFLIYKK (84 aa)) folds into the MtN3/slv 2 domain. A helical transmembrane segment spans residues 132–152 (VLGYICMVFALSVFVAPLGII). Topologically, residues 153–165 (RKVIKTKSAEFMP) are cytoplasmic. The helical transmembrane segment at 166–186 (FGLSFFLTLSAVMWFFYGLLL) threads the bilayer. Over 187-190 (KDMN) the chain is Extracellular. A helical membrane pass occupies residues 191–211 (IALPNVLGFIFGVLQMILFLI). The Cytoplasmic portion of the chain corresponds to 212-289 (YKKPGTKVLE…EKEVFLISKN (78 aa)).

The protein belongs to the SWEET sugar transporter family. In terms of assembly, forms heterooligomers with SWEET8.

It is found in the cell membrane. Mediates both low-affinity uptake and efflux of sugar across the plasma membrane. The polypeptide is Bidirectional sugar transporter SWEET10 (Arabidopsis thaliana (Mouse-ear cress)).